The primary structure comprises 47 residues: PhoP/PhoQ regulator MgrB (47 aa).

Residues 6 to 26 (WVVLVVVVLACLLLWAQVFNM) traverse the membrane as a helical segment.

The protein belongs to the MgrB family. In terms of assembly, may form homooligomers. Probably interacts with the periplasmic domain of PhoQ.

It localises to the cell inner membrane. Its function is as follows. PhoP-regulated transcription is redox-sensitive, being activated when the periplasm becomes more reducing. MgrB acts between DsbA/DsbB and PhoP/PhoQ in this pathway. Represses PhoP/PhoQ signaling, possibly by binding to the periplasmic domain of PhoQ, altering its activity and that of downstream effector PhoP. In Escherichia coli O157:H7, this protein is PhoP/PhoQ regulator MgrB.